The chain runs to 23 residues: Aurein-4.4 (23 aa).

The protein belongs to the frog skin active peptide (FSAP) family. Aurein subfamily. Expressed by the skin dorsal glands.

It is found in the secreted. Its function is as follows. Has no antimicrobial or anticancer activity. This is Aurein-4.4 from Ranoidea aurea (Green and golden bell frog).